A 277-amino-acid chain; its full sequence is MSTSEIISRVWGGVLYMQFHLDRALSNQECPSFYVAVHRNSYLHNSLPAILQFFKPFLKDARLAQSQKWWFEFEKVPLKWNFPVGLLYDLVTTDAQVEKQMWEITLKYYDYPIEYVIPIDQNPSFLKDHWTNQLKEACFILNGSSKLVMNMSRTDSDDFYHAAIHKDSTQFESMFRKLLPSSVSSLKNLPIKVYLPLSNKLIQPVLSNLGRKITLGNLLQDLIPDLFPSSLMYTVAHPYSHGVVLPLDSSIIDLYICMKSLDGFLHISIKMIQKNEH.

Residue K135 forms a Glycyl lysine isopeptide (Lys-Gly) (interchain with G-Cter in ATG12) linkage.

It belongs to the ATG5 family. In terms of assembly, conjugated with ATG12. In terms of processing, conjugated to ATG12; which is essential for autophagy.

It is found in the preautophagosomal structure membrane. Involved in cytoplasm to vacuole transport (Cvt) and autophagic vesicle formation. Autophagy is essential for maintenance of amino acid levels and protein synthesis under nitrogen starvation. Required for selective autophagic degradation of the nucleus (nucleophagy). Also required for mitophagy, which eliminates defective or superfluous mitochondria in order to fulfill cellular energy requirements and prevent excess ROS production. Conjugation with ATG12, through a ubiquitin-like conjugating system involving ATG7 as an E1-like activating enzyme and ATG10 as an E2-like conjugating enzyme, is essential for its function. The ATG12-ATG5 conjugate acts as an E3-like enzyme which is required for lipidation of ATG8 and ATG8 association to the vesicle membranes. The protein is Autophagy protein 5 (ATG5) of Pichia angusta (Yeast).